The primary structure comprises 467 residues: Proton extrusion protein PxcA (467 aa).

The disordered stretch occupies residues Thr183–Thr205. The segment covering Pro191–Ala203 has biased composition (basic and acidic residues). The next 4 membrane-spanning stretches (helical) occupy residues Phe249–Val269, Ile352–Leu372, Ile391–Ile411, and Phe427–Ile447.

It belongs to the CemA family.

The protein resides in the cell inner membrane. Functionally, required for H(+) efflux immediately after light irradiation to form a rapid H(+) concentration gradient across the thylakoid membranes. Together with PxcL, contributes to transient H(+) uptake following dark to light transition. This is Proton extrusion protein PxcA from Trichormus variabilis (strain ATCC 29413 / PCC 7937) (Anabaena variabilis).